Reading from the N-terminus, the 385-residue chain is Centrosomal protein of 44 kDa (385 aa).

The segment at 11-191 (RKLEQRLRTL…TKCYKSALLE (181 aa)) is binds with microtubules and centrioles. The segment covering 194 to 204 (EEEEPTSDCEE) has biased composition (acidic residues). Residues 194–224 (EEEEPTSDCEEDSHLQREMGSPFETAEETPN) form a disordered region. Coiled-coil stretches lie at residues 224–263 (NSEQ…KGKI) and 353–379 (TEES…ELLK).

As to quaternary structure, binds to centriolar microtubules.

Its subcellular location is the cytoplasm. The protein localises to the cytoskeleton. The protein resides in the microtubule organizing center. It localises to the centrosome. It is found in the centriole. Its subcellular location is the spindle pole. The protein localises to the midbody. Functionally, centriole-enriched microtubule-binding protein involved in centriole biogenesis. In collaboration with CEP295 and POC1B, is required for the centriole-to-centrosome conversion by ensuring the formation of bona fide centriole wall. Functions as a linker component that maintains centrosome cohesion. Associates with CROCC and regulates its stability and localization to the centrosome. This chain is Centrosomal protein of 44 kDa (cep44), found in Xenopus tropicalis (Western clawed frog).